A 215-amino-acid chain; its full sequence is Large ribosomal subunit protein bL25 (215 aa).

Residues 1 to 10 (MAKSASNQLR) show a composition bias toward polar residues. Disordered regions lie at residues 1–25 (MAKSASNQLRVTVRTETGKGASRRA) and 187–215 (ELEGEVAGAEEAEEAAVEAGEAEAAGESE).

Belongs to the bacterial ribosomal protein bL25 family. CTC subfamily. As to quaternary structure, part of the 50S ribosomal subunit; part of the 5S rRNA/L5/L18/L25 subcomplex. Contacts the 5S rRNA. Binds to the 5S rRNA independently of L5 and L18.

Its function is as follows. This is one of the proteins that binds to the 5S RNA in the ribosome where it forms part of the central protuberance. The polypeptide is Large ribosomal subunit protein bL25 (Mycobacterium bovis (strain ATCC BAA-935 / AF2122/97)).